Consider the following 113-residue polypeptide: Histidine triad nucleotide-binding protein (113 aa).

Zn(2+)-binding residues include Cys5 and Cys8. Residues 6-113 (IFCKIAQKQI…GGKKLAWDKL (108 aa)) enclose the HIT domain. AMP is bound at residue Asp31. His47 contacts Zn(2+). Asn86, Gly92, and Thr94 together coordinate AMP. Position 97 (His97) interacts with Zn(2+). The Histidine triad motif motif lies at 97–101 (HIHFH). His99 and His101 together coordinate AMP. The active-site Tele-AMP-histidine intermediate is the His99.

Belongs to the HINT family.

Its subcellular location is the nucleus. It is found in the cytoplasm. It catalyses the reaction adenosine 5'-phosphoramidate + H2O = AMP + NH4(+). Hydrolyzes purine nucleotide phosphoramidates with a single phosphate group, including adenosine 5'monophosphoramidate (AMP-NH2), adenosine 5'monophosphomorpholidate (AMP-morpholidate) and guanosine 5'monophosphomorpholidate (GMP-morpholidate). Hydrolyzes lysyl-AMP (AMP-N-epsilon-(N-alpha-acetyl lysine methyl ester)) generated by lysine tRNA ligase, as well as Met-AMP, His-AMP and Asp-AMP, lysyl-GMP (GMP-N-epsilon-(N-alpha-acetyl lysine methyl ester)) and AMP-N-alanine methyl ester. May also function as scaffolding protein that mediates protein-protein interactions. The polypeptide is Histidine triad nucleotide-binding protein (Entamoeba histolytica (strain ATCC 30459 / HM-1:IMSS / ABRM)).